The following is a 451-amino-acid chain: Trigger factor (451 aa).

Residues 165 to 250 (DDKLTIDFEG…LHQIQAREML (86 aa)) form the PPIase FKBP-type domain.

The protein belongs to the FKBP-type PPIase family. Tig subfamily.

It localises to the cytoplasm. It carries out the reaction [protein]-peptidylproline (omega=180) = [protein]-peptidylproline (omega=0). In terms of biological role, involved in protein export. Acts as a chaperone by maintaining the newly synthesized protein in an open conformation. Functions as a peptidyl-prolyl cis-trans isomerase. This is Trigger factor (tig) from Helicobacter pylori (strain ATCC 700392 / 26695) (Campylobacter pylori).